Reading from the N-terminus, the 229-residue chain is MSIALLDIEGTVCPITFVKDCLFPYFSKQYPSYLRDVSFPIDKSDGGLADVLAGFPKEAVASIDQLKNHIDDLVARDVKDPVLKSFQGLVWKEGYAKGDLKAPVYEDAIAFINRSKSVYIYSSGSVGAQKLLFSHVDVNGASVDLTPKLKGYFDITTAGFKQEKDSYLKIAADIGCDPADVIFYSDNVLEVKAALEAGMASKVVVRPGNAELSESDKKSYECISSFTAE.

Mg(2+) contacts are provided by aspartate 7 and glutamate 9. Substrate-binding positions include 122 to 123 (SS) and lysine 161. A Mg(2+)-binding site is contributed by aspartate 186.

Belongs to the HAD-like hydrolase superfamily. MasA/MtnC family. In terms of assembly, monomer. It depends on Mg(2+) as a cofactor.

The protein resides in the cytoplasm. The protein localises to the nucleus. It catalyses the reaction 5-methylsulfanyl-2,3-dioxopentyl phosphate + H2O = 1,2-dihydroxy-5-(methylsulfanyl)pent-1-en-3-one + phosphate. Its pathway is amino-acid biosynthesis; L-methionine biosynthesis via salvage pathway; L-methionine from S-methyl-5-thio-alpha-D-ribose 1-phosphate: step 3/6. It functions in the pathway amino-acid biosynthesis; L-methionine biosynthesis via salvage pathway; L-methionine from S-methyl-5-thio-alpha-D-ribose 1-phosphate: step 4/6. Its function is as follows. Bifunctional enzyme that catalyzes the enolization of 2,3-diketo-5-methylthiopentyl-1-phosphate (DK-MTP-1-P) into the intermediate 2-hydroxy-3-keto-5-methylthiopentenyl-1-phosphate (HK-MTPenyl-1-P), which is then dephosphorylated to form the acireductone 1,2-dihydroxy-3-keto-5-methylthiopentene (DHK-MTPene). The sequence is that of Enolase-phosphatase E1 from Clavispora lusitaniae (strain ATCC 42720) (Yeast).